A 200-amino-acid polypeptide reads, in one-letter code: Large ribosomal subunit protein uL4 (200 aa).

The disordered stretch occupies residues 38-75 (GRQGSKQQKNRSDVSGGGKRPWRQKGTGRARAGTSRGP).

The protein belongs to the universal ribosomal protein uL4 family. In terms of assembly, part of the 50S ribosomal subunit.

In terms of biological role, one of the primary rRNA binding proteins, this protein initially binds near the 5'-end of the 23S rRNA. It is important during the early stages of 50S assembly. It makes multiple contacts with different domains of the 23S rRNA in the assembled 50S subunit and ribosome. Its function is as follows. Forms part of the polypeptide exit tunnel. The polypeptide is Large ribosomal subunit protein uL4 (Azotobacter vinelandii (strain DJ / ATCC BAA-1303)).